We begin with the raw amino-acid sequence, 310 residues long: 2-phospho-L-lactate transferase (310 aa).

2 residues coordinate 7,8-didemethyl-8-hydroxy-5-deazariboflavin: Asp50 and Arg89.

This sequence belongs to the CofD family. As to quaternary structure, homodimer. It depends on Mg(2+) as a cofactor.

It catalyses the reaction (2S)-lactyl-2-diphospho-5'-guanosine + 7,8-didemethyl-8-hydroxy-5-deazariboflavin = oxidized coenzyme F420-0 + GMP + H(+). It functions in the pathway cofactor biosynthesis; coenzyme F420 biosynthesis. Its function is as follows. Catalyzes the transfer of the 2-phospholactate moiety from (2S)-lactyl-2-diphospho-5'-guanosine to 7,8-didemethyl-8-hydroxy-5-deazariboflavin (FO) with the formation of oxidized coenzyme F420-0 and GMP. This is 2-phospho-L-lactate transferase from Methanopyrus kandleri (strain AV19 / DSM 6324 / JCM 9639 / NBRC 100938).